Reading from the N-terminus, the 215-residue chain is Ras-related protein Rab-5A (215 aa).

GTP-binding residues include serine 29, alanine 30, glycine 32, lysine 33, serine 34, serine 35, histidine 46, glutamate 47, threonine 52, and glycine 78. Mg(2+) is bound at residue serine 34. 2 consecutive short sequence motifs (switch) follow at residues 44 to 56 (QFHE…IGAA) and 77 to 93 (AGQE…YRGA). Position 52 (threonine 52) interacts with Mg(2+). Serine 84 carries the post-translational modification Phosphoserine. Positions 133, 134, 136, 164, and 165 each coordinate GTP. A disordered region spans residues 181–215 (LPKNEPQNPGANSARGRGVDLTEPAQPARSQCCSN). 2 S-geranylgeranyl cysteine lipidation sites follow: cysteine 212 and cysteine 213.

It belongs to the small GTPase superfamily. Rab family. As to quaternary structure, interacts with GDI1; this promotes dissociation from membranes; phosphorylation at Ser-84 disrupts this interaction. Interacts with GDI2; phosphorylation at Ser-84 disrupts the interaction. Interacts with EEA1. Interacts with RIN1 and GAPVD1, which regulate its pathway, probably by acting as a GEF. Interacts with RINL. Interacts with ALS2CL, SUN2, ZFYVE20 and RUFY1. Interacts with RABEP1; one RABEP1 homodimer binds two RAB5A chains, but at opposite sides of the dimer. Interacts with SGSM1 and SGSM3. Interacts with PIK3CB. Interacts with OCRL and INPP5F. May be a component of a complex composed of RAB5A, DYN2 and PIK3C3. Does not interact with BLOC-3 complex (heterodimer of HPS1 and HPS4). Interacts with CLN5. Interacts with APPL2. Interacts with F8A1/F8A2/F8A3. Found in a complex with F8A1/F8A2/F8A3, HTT and RAB5A; mediates the recruitment of HTT by RAB5A onto early endosomes. Interacts with ATP9A. Interacts with PPP1R21; mediates the recruitment of FERRY complex by RAB5A onto early endosomes. The cofactor is Mg(2+). Phosphorylation of Ser-84 in the switch II region by LRRK2 prevents the association of RAB regulatory proteins, including RAB GDP dissociation inhibitors GDI1 and GDI2.

The protein localises to the cell membrane. It is found in the early endosome membrane. The protein resides in the melanosome. It localises to the cytoplasmic vesicle. Its subcellular location is the cell projection. The protein localises to the ruffle. It is found in the membrane. The protein resides in the cytoplasm. It localises to the cytosol. Its subcellular location is the phagosome membrane. The protein localises to the endosome membrane. It catalyses the reaction GTP + H2O = GDP + phosphate + H(+). Regulated by guanine nucleotide exchange factors (GEFs) including RINL, which promote the exchange of bound GDP for free GTP. Regulated by GTPase activating proteins (GAPs) which increase the GTP hydrolysis activity. Inhibited by GDP dissociation inhibitors (GDIs). In terms of biological role, the small GTPases Rab are key regulators of intracellular membrane trafficking, from the formation of transport vesicles to their fusion with membranes. Rabs cycle between an inactive GDP-bound form and an active GTP-bound form that is able to recruit to membranes different sets of downstream effectors directly responsible for vesicle formation, movement, tethering and fusion. RAB5A is required for the fusion of plasma membranes and early endosomes. Contributes to the regulation of filopodia extension. Required for the exosomal release of SDCBP, CD63, PDCD6IP and syndecan. Regulates maturation of apoptotic cell-containing phagosomes, probably downstream of DYN2 and PIK3C3. The chain is Ras-related protein Rab-5A from Mus musculus (Mouse).